We begin with the raw amino-acid sequence, 260 residues long: Beta-lactamase SHV-6 (260 aa).

The N-terminal stretch at 1–11 (LLATLPLAVHA) is a signal peptide. Ser-56 acts as the Acyl-ester intermediate in catalysis. Residues Cys-63 and Cys-109 are joined by a disulfide bond. The active-site Proton acceptor is Glu-154. Residue 220–222 (KTG) participates in substrate binding.

Belongs to the class-A beta-lactamase family.

It carries out the reaction a beta-lactam + H2O = a substituted beta-amino acid. SHV enzymes hydrolyze broad spectrum cephalosporins notably cefotaxime and ceftazidime. The protein is Beta-lactamase SHV-6 (bla) of Klebsiella pneumoniae.